The following is a 428-amino-acid chain: Adenylosuccinate synthetase (428 aa).

GTP contacts are provided by residues 12–18 (GDEGKGK) and 40–42 (GHT). The active-site Proton acceptor is the Asp-13. Mg(2+)-binding residues include Asp-13 and Gly-40. Residues 13–16 (DEGK), 38–41 (NAGH), Thr-129, Arg-143, Gln-224, Thr-239, and Arg-303 each bind IMP. Residue His-41 is the Proton donor of the active site. 299-305 (VTTGRIR) is a binding site for substrate. GTP is bound by residues Arg-305, 331–333 (KVD), and 410–412 (AYG).

It belongs to the adenylosuccinate synthetase family. As to quaternary structure, homodimer. Mg(2+) is required as a cofactor.

It is found in the cytoplasm. It carries out the reaction IMP + L-aspartate + GTP = N(6)-(1,2-dicarboxyethyl)-AMP + GDP + phosphate + 2 H(+). Its pathway is purine metabolism; AMP biosynthesis via de novo pathway; AMP from IMP: step 1/2. Functionally, plays an important role in the de novo pathway of purine nucleotide biosynthesis. Catalyzes the first committed step in the biosynthesis of AMP from IMP. The protein is Adenylosuccinate synthetase of Francisella tularensis subsp. mediasiatica (strain FSC147).